The chain runs to 314 residues: MNWLTNVVRPKIRNILKRETPENLWIKCPDTGQLVFYKDVESNQFVIPGSNYHMRMSADARLRSIFDNETWYDVALPEVTADPLKFRDERKYVDRIKDARTKTGLHDSVKVGFGKLEGAGVVVAVQDFDFMGGSLGMAAGEAIVRGLELAVEKQCPFIVFAASGGARMQEGVLSLMQLPRTTVAVQMLREAGQPYIVVLTNPTTGGVTASYAMLGDVQIAEPGALIGFAGARVIEQTIREKLPNGFQRAEYLRDHGMVDMVVHRHDLRPTLARLCRLLTKAPEIDAAPEPSPAAEEPAEPMPAPEAAAPSAPPA.

The CoA carboxyltransferase N-terminal domain maps to 24 to 293 (LWIKCPDTGQ…IDAAPEPSPA (270 aa)). Positions 283-314 (EIDAAPEPSPAAEEPAEPMPAPEAAAPSAPPA) are disordered. 2 stretches are compositionally biased toward low complexity: residues 284-295 (IDAAPEPSPAAE) and 304-314 (PEAAAPSAPPA).

This sequence belongs to the AccD/PCCB family. In terms of assembly, acetyl-CoA carboxylase is a heterohexamer composed of biotin carboxyl carrier protein (AccB), biotin carboxylase (AccC) and two subunits each of ACCase subunit alpha (AccA) and ACCase subunit beta (AccD).

Its subcellular location is the cytoplasm. The enzyme catalyses N(6)-carboxybiotinyl-L-lysyl-[protein] + acetyl-CoA = N(6)-biotinyl-L-lysyl-[protein] + malonyl-CoA. It functions in the pathway lipid metabolism; malonyl-CoA biosynthesis; malonyl-CoA from acetyl-CoA: step 1/1. Functionally, component of the acetyl coenzyme A carboxylase (ACC) complex. Biotin carboxylase (BC) catalyzes the carboxylation of biotin on its carrier protein (BCCP) and then the CO(2) group is transferred by the transcarboxylase to acetyl-CoA to form malonyl-CoA. This is Acetyl-coenzyme A carboxylase carboxyl transferase subunit beta from Nitrobacter hamburgensis (strain DSM 10229 / NCIMB 13809 / X14).